Consider the following 130-residue polypeptide: Phosphoribosyl-AMP cyclohydrolase (130 aa).

Position 77 (Asp77) interacts with Mg(2+). Cys78 is a binding site for Zn(2+). Residues Asp79 and Asp81 each coordinate Mg(2+). The Zn(2+) site is built by Cys95 and Cys102.

Belongs to the PRA-CH family. In terms of assembly, homodimer. The cofactor is Mg(2+). It depends on Zn(2+) as a cofactor.

It is found in the cytoplasm. The catalysed reaction is 1-(5-phospho-beta-D-ribosyl)-5'-AMP + H2O = 1-(5-phospho-beta-D-ribosyl)-5-[(5-phospho-beta-D-ribosylamino)methylideneamino]imidazole-4-carboxamide. It functions in the pathway amino-acid biosynthesis; L-histidine biosynthesis; L-histidine from 5-phospho-alpha-D-ribose 1-diphosphate: step 3/9. Catalyzes the hydrolysis of the adenine ring of phosphoribosyl-AMP. This is Phosphoribosyl-AMP cyclohydrolase from Pseudomonas entomophila (strain L48).